Reading from the N-terminus, the 455-residue chain is GTPase Der (455 aa).

EngA-type G domains lie at 4-174 and 183-358; these read PIVA…PAGQ and LKIA…SERN. Residues 10–17, 57–61, 126–129, 189–196, 236–240, and 301–304 contribute to the GTP site; these read GRPNVGKS, DTAGL, NKAD, DTAGI, and NKWD. Residues 359–444 form the KH-like domain; it reads KRVSTSDINN…PIILVFKGRE (86 aa).

It belongs to the TRAFAC class TrmE-Era-EngA-EngB-Septin-like GTPase superfamily. EngA (Der) GTPase family. In terms of assembly, associates with the 50S ribosomal subunit.

In terms of biological role, GTPase that plays an essential role in the late steps of ribosome biogenesis. The polypeptide is GTPase Der (Herpetosiphon aurantiacus (strain ATCC 23779 / DSM 785 / 114-95)).